Reading from the N-terminus, the 58-residue chain is UPF0337 protein SAV_738 (58 aa).

Residues 1 to 58 are disordered; sequence MAADEKAQANGEQAKGKVKKVVGGAAGNESLKGKGHAEESKGDLRAAKEKAKDAIKRK. Residues 31–58 are compositionally biased toward basic and acidic residues; that stretch reads LKGKGHAEESKGDLRAAKEKAKDAIKRK.

Belongs to the UPF0337 (CsbD) family.

In Streptomyces avermitilis (strain ATCC 31267 / DSM 46492 / JCM 5070 / NBRC 14893 / NCIMB 12804 / NRRL 8165 / MA-4680), this protein is UPF0337 protein SAV_738.